A 224-amino-acid polypeptide reads, in one-letter code: Urease accessory protein UreF 2 (224 aa).

Belongs to the UreF family. As to quaternary structure, ureD, UreF and UreG form a complex that acts as a GTP-hydrolysis-dependent molecular chaperone, activating the urease apoprotein by helping to assemble the nickel containing metallocenter of UreC. The UreE protein probably delivers the nickel.

Its subcellular location is the cytoplasm. In terms of biological role, required for maturation of urease via the functional incorporation of the urease nickel metallocenter. In Pseudomonas syringae pv. tomato (strain ATCC BAA-871 / DC3000), this protein is Urease accessory protein UreF 2.